A 498-amino-acid chain; its full sequence is N-acyl-D-aspartate deacylase (498 aa).

Residues 478–498 form a disordered region; sequence AERPGQVLAPGDAIPWSQQSE.

This sequence belongs to the metallo-dependent hydrolases superfamily. N-acyl-D-amino-acid deacylase family. It depends on Zn(2+) as a cofactor.

The protein resides in the cytoplasm. The catalysed reaction is an N-acyl-D-aspartate + H2O = D-aspartate + a carboxylate. The protein is N-acyl-D-aspartate deacylase of Alcaligenes xylosoxydans xylosoxydans (Achromobacter xylosoxidans).